A 400-amino-acid chain; its full sequence is Endoglucanase 5A (400 aa).

Residues 1-26 (MKKITTIFVVLLMTVALFSIGNTTAA) form the signal peptide. Substrate-binding positions include H61, 65 to 66 (WY), Y92, and H127. The active-site Proton donor is the E165. Residue Y228 coordinates substrate. E254 (nucleophile) is an active-site residue. Substrate contacts are provided by residues 260-261 (AT), W288, and 293-295 (KDE). The segment at 328-363 (ESASIPPSDPTPPSDPGEPDPTPPSDPGEYPAWDPN) is disordered. The span at 334-353 (PSDPTPPSDPGEPDPTPPSD) shows a compositional bias: pro residues. The region spanning 357–396 (YPAWDPNQIYTNEIVYHNGQLWQAKWWTQNQEPGDPYGPW) is the Chitin-binding type-3 domain.

This sequence belongs to the glycosyl hydrolase 5 (cellulase A) family. Monomer.

The protein resides in the secreted. The enzyme catalyses Endohydrolysis of (1-&gt;4)-beta-D-glucosidic linkages in cellulose, lichenin and cereal beta-D-glucans.. In Salipaludibacillus agaradhaerens (Bacillus agaradhaerens), this protein is Endoglucanase 5A (cel5A).